The primary structure comprises 237 residues: Phosphoribosylaminoimidazole-succinocarboxamide synthase (237 aa).

It belongs to the SAICAR synthetase family.

It carries out the reaction 5-amino-1-(5-phospho-D-ribosyl)imidazole-4-carboxylate + L-aspartate + ATP = (2S)-2-[5-amino-1-(5-phospho-beta-D-ribosyl)imidazole-4-carboxamido]succinate + ADP + phosphate + 2 H(+). Its pathway is purine metabolism; IMP biosynthesis via de novo pathway; 5-amino-1-(5-phospho-D-ribosyl)imidazole-4-carboxamide from 5-amino-1-(5-phospho-D-ribosyl)imidazole-4-carboxylate: step 1/2. This is Phosphoribosylaminoimidazole-succinocarboxamide synthase from Pseudomonas fluorescens (strain Pf0-1).